The sequence spans 338 residues: Glyceraldehyde-3-phosphate dehydrogenase (338 aa).

Residues 11–12 and Gly-111 each bind NAD(+); that span reads TI. A D-glyceraldehyde 3-phosphate-binding site is contributed by 140 to 142; it reads SCN. Residue Cys-141 is the Nucleophile of the active site. Arg-169 contacts NAD(+). The disordered stretch occupies residues 170–195; that stretch reads GSDPSEVKKGPINSIVPNPPKVPSHH. 195–196 provides a ligand contact to D-glyceraldehyde 3-phosphate; it reads HG. Residue Gln-302 coordinates NAD(+).

The protein belongs to the glyceraldehyde-3-phosphate dehydrogenase family. In terms of assembly, homotetramer.

It is found in the cytoplasm. The catalysed reaction is D-glyceraldehyde 3-phosphate + phosphate + NADP(+) = (2R)-3-phospho-glyceroyl phosphate + NADPH + H(+). The enzyme catalyses D-glyceraldehyde 3-phosphate + phosphate + NAD(+) = (2R)-3-phospho-glyceroyl phosphate + NADH + H(+). The protein operates within carbohydrate degradation; glycolysis; pyruvate from D-glyceraldehyde 3-phosphate: step 1/5. In Methanobrevibacter smithii (strain ATCC 35061 / DSM 861 / OCM 144 / PS), this protein is Glyceraldehyde-3-phosphate dehydrogenase.